Reading from the N-terminus, the 323-residue chain is Pseudouridylate synthase TRUB2, mitochondrial (323 aa).

D98 acts as the Nucleophile in catalysis. A disordered region spans residues 302 to 323 (SGHQQQLPSAGQPWASRVQAPL).

This sequence belongs to the pseudouridine synthase TruB family. As to quaternary structure, forms a regulatory protein-RNA complex, consisting of RCC1L, NGRN, RPUSD3, RPUSD4, TRUB2, FASTKD2 and 16S mt-rRNA.

It is found in the mitochondrion matrix. It catalyses the reaction a uridine in mRNA = a pseudouridine in mRNA. The enzyme catalyses uridine(55) in tRNA = pseudouridine(55) in tRNA. Minor enzyme contributing to the isomerization of uridine to pseudouridine (pseudouridylation) of specific mitochondrial mRNAs (mt-mRNAs) such as COXI and COXIII mt-mRNAs. As a component of a functional protein-RNA module, consisting of RCC1L, NGRN, RPUSD3, RPUSD4, TRUB2, FASTKD2 and 16S mitochondrial ribosomal RNA (16S mt-rRNA), controls 16S mt-rRNA abundance and is required for intra-mitochondrial translation. Also catalyzes pseudouridylation of some tRNAs, including synthesis of pseudouridine(55) from uracil-55, in the psi GC loop of a subset of tRNAs. This is Pseudouridylate synthase TRUB2, mitochondrial from Rattus norvegicus (Rat).